Here is a 733-residue protein sequence, read N- to C-terminus: Phosphoribosylformylglycinamidine synthase subunit PurL (733 aa).

Residue His41 is part of the active site. ATP-binding residues include Tyr44 and Lys83. Glu85 contributes to the Mg(2+) binding site. Residues 86-89 (SHNH) and Arg108 each bind substrate. His87 (proton acceptor) is an active-site residue. A Mg(2+)-binding site is contributed by Asp109. A disordered region spans residues 212–232 (GASFASQELSEESEEKRPSVQ). Gln232 is a binding site for substrate. Asp260 provides a ligand contact to Mg(2+). Position 304–306 (304–306 (ESQ)) interacts with substrate. The ATP site is built by Asp488 and Gly525. Mg(2+) is bound at residue Asn526. Ser528 is a substrate binding site.

This sequence belongs to the FGAMS family. Monomer. Part of the FGAM synthase complex composed of 1 PurL, 1 PurQ and 2 PurS subunits.

It localises to the cytoplasm. The enzyme catalyses N(2)-formyl-N(1)-(5-phospho-beta-D-ribosyl)glycinamide + L-glutamine + ATP + H2O = 2-formamido-N(1)-(5-O-phospho-beta-D-ribosyl)acetamidine + L-glutamate + ADP + phosphate + H(+). It participates in purine metabolism; IMP biosynthesis via de novo pathway; 5-amino-1-(5-phospho-D-ribosyl)imidazole from N(2)-formyl-N(1)-(5-phospho-D-ribosyl)glycinamide: step 1/2. Its function is as follows. Part of the phosphoribosylformylglycinamidine synthase complex involved in the purines biosynthetic pathway. Catalyzes the ATP-dependent conversion of formylglycinamide ribonucleotide (FGAR) and glutamine to yield formylglycinamidine ribonucleotide (FGAM) and glutamate. The FGAM synthase complex is composed of three subunits. PurQ produces an ammonia molecule by converting glutamine to glutamate. PurL transfers the ammonia molecule to FGAR to form FGAM in an ATP-dependent manner. PurS interacts with PurQ and PurL and is thought to assist in the transfer of the ammonia molecule from PurQ to PurL. The polypeptide is Phosphoribosylformylglycinamidine synthase subunit PurL (Thermoanaerobacter pseudethanolicus (strain ATCC 33223 / 39E) (Clostridium thermohydrosulfuricum)).